A 509-amino-acid chain; its full sequence is Activin receptor type-1 (509 aa).

Positions 1-20 are cleaved as a signal peptide; it reads MVDGVMILPVLVMIAFPFPS. Over 21-123 the chain is Extracellular; that stretch reads MEDEKPKVNP…FPGTQNFHLE (103 aa). An N-linked (GlcNAc...) asparagine glycan is attached at Asn-102. Residues 124–146 form a helical membrane-spanning segment; it reads VGLIILSVVFAVCLLACLLGVAL. The Cytoplasmic segment spans residues 147-509; it reads RKFKRRNQER…NSLDKLKTDC (363 aa). The 30-residue stretch at 178 to 207 folds into the GS domain; that stretch reads STLADLLDHSCTSGSGSGLPFLVQRTVARQ. A Protein kinase domain is found at 208–502; that stretch reads ITLLECVGKG…KTLTKIDNSL (295 aa). Residues 214–222 and Lys-235 contribute to the ATP site; that span reads VGKGRYGEV. Residue Asp-336 is the Proton acceptor of the active site. A Phosphoserine modification is found at Ser-501.

The protein belongs to the protein kinase superfamily. TKL Ser/Thr protein kinase family. TGFB receptor subfamily. As to quaternary structure, interacts with FKBP1A. Interacts with FCHO1. Interacts with CLU. Interacts with type II receptors AMHR2 and ACVR2A. Interacts with BMP7. Interacts with BMP9. Interacts with BMP6 (when glycosylated); the interaction may induce HAMP expression. Interacts with TSC22D1/TSC-22. Mg(2+) is required as a cofactor. Requires Mn(2+) as cofactor.

The protein localises to the membrane. The enzyme catalyses L-threonyl-[receptor-protein] + ATP = O-phospho-L-threonyl-[receptor-protein] + ADP + H(+). It catalyses the reaction L-seryl-[receptor-protein] + ATP = O-phospho-L-seryl-[receptor-protein] + ADP + H(+). Functionally, bone morphogenetic protein (BMP) type I receptor that is involved in a wide variety of biological processes, including bone, heart, cartilage, nervous, and reproductive system development and regulation. As a type I receptor, forms heterotetrameric receptor complexes with the type II receptors AMHR2, ACVR2A ors ACVR2B. Upon binding of ligands such as BMP7 or BMP9 to the heteromeric complexes, type II receptors transphosphorylate ACVR1 intracellular domain. In turn, ACVR1 kinase domain is activated and subsequently phosphorylates SMAD1/5/8 proteins that transduce the signal. In addition to its role in mediating BMP pathway-specific signaling, suppresses TGFbeta/activin pathway signaling by interfering with the binding of activin to its type II receptor. Besides canonical SMAD signaling, can activate non-canonical signaling pathways. May promote the expression of HAMP, potentially via its interaction with BMP6. The protein is Activin receptor type-1 (ACVR1) of Bos taurus (Bovine).